A 134-amino-acid polypeptide reads, in one-letter code: Protein NrdI (134 aa).

The protein belongs to the NrdI family.

Functionally, probably involved in ribonucleotide reductase function. In Serratia proteamaculans (strain 568), this protein is Protein NrdI.